Consider the following 289-residue polypeptide: UTP--glucose-1-phosphate uridylyltransferase 2 (289 aa).

This sequence belongs to the UDPGP type 2 family.

The enzyme catalyses alpha-D-glucose 1-phosphate + UTP + H(+) = UDP-alpha-D-glucose + diphosphate. It participates in glycolipid metabolism; diglucosyl-diacylglycerol biosynthesis. In terms of biological role, catalyzes the formation of UDP-glucose from glucose-1-phosphate and UTP. This is an intermediate step in the biosynthesis of diglucosyl-diacylglycerol (Glc2-DAG), i.e. a glycolipid found in the membrane, which is also used as a membrane anchor for lipoteichoic acid (LTA). The polypeptide is UTP--glucose-1-phosphate uridylyltransferase 2 (gtaB2) (Staphylococcus saprophyticus subsp. saprophyticus (strain ATCC 15305 / DSM 20229 / NCIMB 8711 / NCTC 7292 / S-41)).